The primary structure comprises 378 residues: Nitronate monooxygenase (378 aa).

Residues 1–15 (MHFPGHSSKKEESAQ) constitute a propeptide that is removed on maturation. 37–39 (PMY) is an FMN binding site. The Proton acceptor role is filled by H196. H196 contributes to the substrate binding site. FMN is bound by residues 229–231 (AGG) and 252–253 (GT).

It belongs to the nitronate monooxygenase family. NMO class II subfamily. As to quaternary structure, homodimer. FMN serves as cofactor.

The catalysed reaction is ethylnitronate + O2 = chemical entity + acetaldehyde + nitrite + H(+). Its function is as follows. Catalyzes the oxidation of alkyl nitronates to produce the corresponding carbonyl compounds and nitrites. Anionic forms of nitroalkanes are much better substrates than are neutral forms. The chain is Nitronate monooxygenase (ncd-2) from Neurospora crassa (strain ATCC 24698 / 74-OR23-1A / CBS 708.71 / DSM 1257 / FGSC 987).